Consider the following 94-residue polypeptide: Large ribosomal subunit protein bL27 (94 aa).

Residues 1 to 9 (MNLANLQLF) constitute a propeptide that is removed on maturation. Residues 11-33 (HKKGGGSTSNGRDSQAKRLGAKA) are disordered.

It belongs to the bacterial ribosomal protein bL27 family. The N-terminus is cleaved by ribosomal processing cysteine protease Prp.

The sequence is that of Large ribosomal subunit protein bL27 from Streptococcus agalactiae serotype V (strain ATCC BAA-611 / 2603 V/R).